Reading from the N-terminus, the 479-residue chain is Kynurenine 3-monooxygenase (479 aa).

Residues Val19, 37-40, and Ala57 each bind FAD; that span reads YEAR. L-kynurenine contacts are provided by Arg85 and Tyr99. FAD is bound by residues Arg111, Leu136, Thr172, Asp304, and 317 to 318; that span reads MN. L-kynurenine-binding residues include Asn363 and Tyr398. 2 consecutive transmembrane segments (helical) span residues 385 to 404 and 425 to 445; these read FLHAIMPSTFIPLYTMVAFT and GLFVLGSLIAIGGTYLLVHHL.

It belongs to the aromatic-ring hydroxylase family. KMO subfamily. It depends on FAD as a cofactor. As to expression, expressed by organs containing secondary lymphoid tissue, such as the lung, spleen, mesenteric lymph node, thymus and peripheral lymph nodes.

The protein localises to the mitochondrion outer membrane. The catalysed reaction is L-kynurenine + NADPH + O2 + H(+) = 3-hydroxy-L-kynurenine + NADP(+) + H2O. Its pathway is cofactor biosynthesis; NAD(+) biosynthesis; quinolinate from L-kynurenine: step 1/3. Catalyzes the hydroxylation of L-kynurenine (L-Kyn) to form 3-hydroxy-L-kynurenine (L-3OHKyn). Required for synthesis of quinolinic acid, a neurotoxic NMDA receptor antagonist and potential endogenous inhibitor of NMDA receptor signaling in axonal targeting, synaptogenesis and apoptosis during brain development. Quinolinic acid may also affect NMDA receptor signaling in pancreatic beta cells, osteoblasts, myocardial cells, and the gastrointestinal tract. The protein is Kynurenine 3-monooxygenase of Mus musculus (Mouse).